Here is a 177-residue protein sequence, read N- to C-terminus: Large ribosomal subunit protein uL6 (177 aa).

This sequence belongs to the universal ribosomal protein uL6 family. In terms of assembly, part of the 50S ribosomal subunit.

Its function is as follows. This protein binds to the 23S rRNA, and is important in its secondary structure. It is located near the subunit interface in the base of the L7/L12 stalk, and near the tRNA binding site of the peptidyltransferase center. The protein is Large ribosomal subunit protein uL6 of Albidiferax ferrireducens (strain ATCC BAA-621 / DSM 15236 / T118) (Rhodoferax ferrireducens).